Consider the following 131-residue polypeptide: Small ribosomal subunit protein bS6 (131 aa).

The tract at residues 100–131 (SPMVKAKDERRSRDYSLEDANMDAEEAGDSEE) is disordered. A compositionally biased stretch (basic and acidic residues) spans 104–115 (KAKDERRSRDYS). Over residues 119–131 (ANMDAEEAGDSEE) the composition is skewed to acidic residues.

The protein belongs to the bacterial ribosomal protein bS6 family.

In terms of biological role, binds together with bS18 to 16S ribosomal RNA. The chain is Small ribosomal subunit protein bS6 from Photorhabdus laumondii subsp. laumondii (strain DSM 15139 / CIP 105565 / TT01) (Photorhabdus luminescens subsp. laumondii).